We begin with the raw amino-acid sequence, 1221 residues long: 2-oxoglutarate dehydrogenase E1/E2 component (1221 aa).

Residues 2-40 form a 2-oxoglutarate dehydrogenase E1, N-terminal part region; it reads SSASTFGQNAWLVDEMFQQFQKDPKSVDKEWRELFEAQG. The tract at residues 22-107 is disordered; sequence QKDPKSVDKE…KLPEPGQTPI (86 aa). Residues 23-36 show a composition bias toward basic and acidic residues; the sequence is KDPKSVDKEWRELF. Over residues 41–52 the composition is skewed to polar residues; it reads GPNTTPATTEAQ. The interval 41–89 is linker; that stretch reads GPNTTPATTEAQPSAPKESAKPAPKAAPAAKAAPRVETKPADKTAPKAK. Over residues 53-73 the composition is skewed to low complexity; it reads PSAPKESAKPAPKAAPAAKAA. Over residues 74–90 the composition is skewed to basic and acidic residues; sequence PRVETKPADKTAPKAKE. The tract at residues 90 to 337 is succinyltransferase E2; the sequence is ESSVPQQPKL…LRTMSRLLTD (248 aa). The active-site Proton acceptor; for succinyltransferase activity is histidine 316. The interval 338-1221 is 2-oxoglutarate dehydrogenase E1, C-terminal part; sequence DSFWDEIFDA…KQLIDEAFEA (884 aa). A thiamine diphosphate-binding site is contributed by arginine 544. The 2-oxoglutarate site is built by histidine 583 and serine 608. 6 residues coordinate thiamine diphosphate: serine 608, leucine 610, aspartate 645, alanine 646, alanine 647, and asparagine 678. Aspartate 645 lines the Mg(2+) pocket. Positions 678 and 680 each coordinate Mg(2+). Histidine 1017 serves as a coordination point for 2-oxoglutarate. Threonine 1035, arginine 1051, lysine 1087, serine 1090, and arginine 1144 together coordinate acetyl-CoA.

It in the N-terminal section; belongs to the alpha-ketoglutarate dehydrogenase family. In the C-terminal section; belongs to the 2-oxoacid dehydrogenase family. In terms of assembly, homodimer. Part of an unusual ODH/PDH supercomplex, consisting of AceE (E1), AceF (E2), and Lpd (E3) together with OdhA (E1+E2). Interacts with the FHA domain of unphosphorylated OdhI via its C-terminal dehydrogenase domain. Mg(2+) serves as cofactor. Requires thiamine diphosphate as cofactor.

It carries out the reaction N(6)-[(R)-lipoyl]-L-lysyl-[protein] + 2-oxoglutarate + H(+) = N(6)-[(R)-S(8)-succinyldihydrolipoyl]-L-lysyl-[protein] + CO2. The enzyme catalyses N(6)-[(R)-dihydrolipoyl]-L-lysyl-[protein] + succinyl-CoA = N(6)-[(R)-S(8)-succinyldihydrolipoyl]-L-lysyl-[protein] + CoA. Its pathway is carbohydrate metabolism; tricarboxylic acid cycle; succinyl-CoA from 2-oxoglutarate (dehydrogenase route): step 1/1. Its activity is regulated as follows. Inhibited by unphosphorylated OdhI, but not by phosphorylated OdhI. In terms of biological role, catalyzes the E1 and E2 reactions as part of 2-oxoglutarate dehydrogenase (ODH) activity, to convert 2-oxoglutarate to succinyl-CoA and CO(2). OdhA has reductase activity with 2-oxoglutarate but does not react with pyruvate, and also displays transsuccinylase but no transacetylase activity. Since OdhA is not lipoylated, the succinyltransferase activity of its E2 domain is dependent on lipoyl residues of the acetyltransferase AceF. This Corynebacterium glutamicum (strain ATCC 13032 / DSM 20300 / JCM 1318 / BCRC 11384 / CCUG 27702 / LMG 3730 / NBRC 12168 / NCIMB 10025 / NRRL B-2784 / 534) protein is 2-oxoglutarate dehydrogenase E1/E2 component.